Reading from the N-terminus, the 339-residue chain is Hairy/enhancer-of-split related with YRPW motif protein 2 (339 aa).

Residues 1 to 52 are disordered; that stretch reads MKRPCEETTSESDLDETIDVGSENNYPGHATSSVMRSNSPTTTSQIMARKKR. A compositionally biased stretch (acidic residues) spans 8–18; it reads TTSESDLDETI. Polar residues predominate over residues 22 to 46; it reads SENNYPGHATSSVMRSNSPTTTSQI. The tract at residues 47–116 is transcriptional repression and interaction with NCOR1 and SIN3A; it reads MARKKRRGII…GGKGYFDAHA (70 aa). The bHLH domain occupies 48-103; sequence ARKKRRGIIEKRRRDRINNSLSELRRLVPTAFEKQGSAKLEKAEILQMTVDHLKML. One can recognise an Orange domain in the interval 122–157; sequence MSIGFRECLTEVARYLSSVEGLDPSDPLRVRLVSHL. Residues 310–339 form a disordered region; the sequence is SVSAASSPQQTSTGTNNKPYQPWGTEVGAF. A compositionally biased stretch (polar residues) spans 318-328; sequence QQTSTGTNNKP. The YQPW motif motif lies at 329-332; the sequence is YQPW.

Belongs to the HEY family. May self-associate. Interacts with ARNT. Interacts with GATA4, GATA6, HES1 and HEYL. Interacts with HDAC1, NCOR1 and SIN3A. In terms of tissue distribution, highly expressed in the aorta, lower expression detected in the heart, brain, kidney, lung, muscle, ovary and testis.

Its subcellular location is the nucleus. Functionally, transcriptional repressor which functions as a downstream effector of Notch signaling in cardiovascular development. Specifically required for the Notch-induced endocardial epithelial to mesenchymal transition, which is itself criticial for cardiac valve and septum development. May be required in conjunction with HEY1 to specify arterial cell fate or identity. Promotes maintenance of neuronal precursor cells and glial versus neuronal fate specification. Binds preferentially to the canonical E box sequence 5'-CACGTG-3'. Represses transcription by the cardiac transcriptional activators GATA4 and GATA6 and by the neuronal bHLH factors ASCL1/MASH1 and NEUROD4/MATH3. The protein is Hairy/enhancer-of-split related with YRPW motif protein 2 (Hey2) of Mus musculus (Mouse).